Consider the following 648-residue polypeptide: Putative potassium transport protein DDB_G0292412 (648 aa).

Residues 48–68 (LFLLVILVQLGSTVLLTLPIV) form a helical membrane-spanning segment. Asn81 carries N-linked (GlcNAc...) asparagine glycosylation. Disordered stretches follow at residues 106 to 145 (HDFK…DDND) and 223 to 261 (QQQQ…DSQS). Residues 110–129 (DDDDENDNNNNEENDDNDDE) show a composition bias toward acidic residues. Positions 199-227 (IIQQQQQQQQQQQQQQQQQQQQQQQQQQQ) form a coiled coil. Asn239, Asn243, Asn247, Asn248, Asn254, and Asn257 each carry an N-linked (GlcNAc...) asparagine glycan. The next 6 membrane-spanning stretches (helical) occupy residues 313 to 333 (LLVI…ISIG), 353 to 373 (GWWW…LALF), 385 to 405 (FLLI…PVFL), 443 to 463 (VQLF…MALL), 472 to 491 (NMNY…STRT), and 505 to 525 (SVLL…IISL). N-linked (GlcNAc...) asparagine glycosylation is present at Asn536. Helical transmembrane passes span 550 to 570 (IFVP…LLES), 571 to 591 (GVIT…NVGL), and 592 to 612 (SISI…MLAG).

It belongs to the TrkH potassium transport family.

It localises to the membrane. Its function is as follows. May function as a potassium transporter. This Dictyostelium discoideum (Social amoeba) protein is Putative potassium transport protein DDB_G0292412.